Consider the following 552-residue polypeptide: MGSILSRRIAGVEDIDIQANSAYRYPPKSGNYFASHFFMGGEKFDTPHPEGYLFGENMDLNFLGSRPVQFPYVTPAPHEPVKTLRSLVNIRKDSLRLVRYKDDADSPTEDGDKPRVLYSLEFTFDADARVAITIYCQASEEFLNGRAVYSPKSPSLQSETVHYKRGVSQQFSLPSFKIDFSEWKDDELNFDLDRGVFPVVIQAVVDEGDVVEVTGHAHVLLAAFEKHMDGSFSVKPLKQKQIVDRVSYLLQEIYGIENKNNQETKPSDDENSDNSNECVVCLSDLRDTLILPCRHLCLCTSCADTLRYQANNCPICRLPFRALLQIRAVRKKPGALSPVSFSPVLAQSLEHDEHSCPFKKSKPHPASLASKKPKRETNSDSVPPGYEPISLLEALNGLRAVSPAIPSAPLYEEITYSGISDGLSQASCPLAAIDHILDSSRQKGRPQSKAPDSTLRSPSSPIHEEDEEKLSEDVDAPPPLGGAELALRESSSPESFITEEVDESSSPQQGTRAASIENVLQDSSPEHCGRGPPADIYLPALGPDSCSVGIDE.

Residue Gly-2 is the site of N-myristoyl glycine attachment. The segment at 278–317 adopts an RING-type zinc-finger fold; sequence CVVCLSDLRDTLILPCRHLCLCTSCADTLRYQANNCPICR. Positions 355–384 are disordered; it reads SCPFKKSKPHPASLASKKPKRETNSDSVPP. A Required for TSG101-binding motif is present at residues 406 to 409; it reads PSAP. At Tyr-411 the chain carries Phosphotyrosine. The disordered stretch occupies residues 439–552; that stretch reads SSRQKGRPQS…PDSCSVGIDE (114 aa). Positions 450 to 460 are enriched in polar residues; sequence APDSTLRSPSS. Residues 464-475 show a composition bias toward acidic residues; the sequence is EEDEEKLSEDVD. The residue at position 471 (Ser-471) is a Phosphoserine. A compositionally biased stretch (polar residues) spans 504 to 523; it reads SSSPQQGTRAASIENVLQDS. Phosphoserine is present on Ser-524.

Interacts with MC1R and MC4R, but not with TBXA2R. Interacts with TSG101. Interacts with mislocalized cytosolically exposed PRNP; this interaction alters MGRN1 subcellular location and causes lysosomal enlargement. In terms of processing, autoubiquitinated in vitro.

The protein localises to the early endosome. It localises to the cytoplasm. It is found in the cytosol. The protein resides in the nucleus. Its subcellular location is the cell membrane. The enzyme catalyses S-ubiquitinyl-[E2 ubiquitin-conjugating enzyme]-L-cysteine + [acceptor protein]-L-lysine = [E2 ubiquitin-conjugating enzyme]-L-cysteine + N(6)-ubiquitinyl-[acceptor protein]-L-lysine.. It functions in the pathway protein modification; protein ubiquitination. Functionally, E3 ubiquitin-protein ligase. Mediates monoubiquitination at multiple sites of TSG101 in the presence of UBE2D1, but not of UBE2G1, nor UBE2H. Plays a role in the regulation of endosome-to-lysosome trafficking. Impairs MC1R- and MC4R-signaling by competing with GNAS-binding to MCRs and inhibiting agonist-induced cAMP production. Does not inhibit ADRB2-signaling. Does not promote MC1R ubiquitination. Acts also as a negative regulator of hedgehog signaling. This is E3 ubiquitin-protein ligase MGRN1 (MGRN1) from Homo sapiens (Human).